We begin with the raw amino-acid sequence, 493 residues long: MFKFALTLTLCLAGSLSLAQHNPHWWGNRNTIVHLFEWKWSDIAQECESFLGPRGFAGVQVSPVNENIISAGRPWWERYQPISYKLTTRSGNEEEFGDMVRRCNDVGVRIYVDVLLNHMSGDFDGVAVGTAGTEAEPRKKSFPGVPYTAQDFHPTCEITDWNDRFQVQQCELVGLKDLDQSSDWVRSKLIEFLDHLIELGVAGFRVDAAKHMASEDLEYIYSSLSNLNIDHGFPHNSRPFIFQEVIDHGHETVSRDEYKDLGAVTEFRFSEEIGNAFRGNNALKWLQSWGTGWGFLPSGQALTFVDNHDNQRDAGAVLSYKSPRQYKMATAFHLAYPYGISRVMSSFAFDDHDTPPPQDAQERIISPEFDEDGACVNGWICEHRWRQIYAMVGFKNAVRDTEITGWWDNGDNQIAFCRGNKGFLAINNNLYDLSQDLNTCLPAGTYCDVISGSLIDGSCTGKSVTVNENGFGYIHIGSDDFDGVLALHVDAKV.

Residues 1–19 form the signal peptide; the sequence is MFKFALTLTLCLAGSLSLA. A Pyrrolidone carboxylic acid modification is found at glutamine 20. Cysteines 47 and 103 form a disulfide. Residues asparagine 117, glutamine 168, and aspartate 177 each coordinate Ca(2+). The cysteines at positions 156 and 170 are disulfide-linked. A chloride-binding site is contributed by arginine 205. Aspartate 207 (nucleophile) is an active-site residue. Residue histidine 211 participates in Ca(2+) binding. Catalysis depends on glutamate 244, which acts as the Proton donor. Residues asparagine 307 and arginine 342 each coordinate chloride. Cystine bridges form between cysteine 375–cysteine 381, cysteine 417–cysteine 440, and cysteine 447–cysteine 459.

Belongs to the glycosyl hydrolase 13 family. As to quaternary structure, monomer. Ca(2+) serves as cofactor. Requires chloride as cofactor.

It is found in the secreted. It carries out the reaction Endohydrolysis of (1-&gt;4)-alpha-D-glucosidic linkages in polysaccharides containing three or more (1-&gt;4)-alpha-linked D-glucose units.. This Drosophila sechellia (Fruit fly) protein is Alpha-amylase-related protein (Amyrel).